Here is a 130-residue protein sequence, read N- to C-terminus: MSATQYYGTGRRKTSTARVFLKAGSGNLVINNRSIDQYFGRETARMVVRQPLELVDATEKFDVYITVKGGGISGQAGAIRHGITRALMQYDETLRRTLRSAGFVTRDSREVERKKVGLRKARRRPQFSKR.

The tract at residues 107 to 130 (DSREVERKKVGLRKARRRPQFSKR) is disordered. Positions 116–130 (VGLRKARRRPQFSKR) are enriched in basic residues.

The protein belongs to the universal ribosomal protein uS9 family.

The sequence is that of Small ribosomal subunit protein uS9 from Marinomonas sp. (strain MWYL1).